A 215-amino-acid polypeptide reads, in one-letter code: Protein LURP-one-related 4 (215 aa).

The protein belongs to the LOR family.

Might be related to the phospholipid scramblase and tubby-like superfamily of membrane tethered transcription factors. The protein is Protein LURP-one-related 4 of Arabidopsis thaliana (Mouse-ear cress).